Reading from the N-terminus, the 410-residue chain is Sprouty-related, EVH1 domain-containing protein 2 (410 aa).

Residues 5-122 (THPDDDSYIV…RGVRKAIEDL (118 aa)) form the WH1 domain. Residues 127-171 (TTSSSTLHNEAELGDDDVFTTATDSSSNSSQKREPTTRTISSPTS) are disordered. The segment covering 146 to 156 (TTATDSSSNSS) has biased composition (polar residues). The KBD domain occupies 197-252 (SYPQVTFPEDDEEIVRINPREKIWMTGYEDYRHAPVRGKYLDTTEDADSYVRFAKG). Tyrosine 224 and tyrosine 227 each carry phosphotyrosine. A disordered region spans residues 274 to 294 (DPKGSVIKTQPPRAKSRRRKE). Residues 300–408 (RCVYCRDMFN…CRCCGGKHKA (109 aa)) form the SPR domain.

Homodimer and heterodimer. Able to interact with SPRED1 to form heterodimers. Interacts with RAS. May interact with ZDHHC13 (via ANK repeats) and ZDHHC17 (via ANK repeats). Interacts with TESK1. Interacts with NF1. In terms of processing, phosphorylated on serine and threonine residues. Phosphorylated on tyrosine. Phosphorylation of Tyr-224 and Tyr-227 are required for ubiquitination. Post-translationally, ubiquitinated; leading to degradation by the proteasome. As to expression, predominantly expressed in lung, liver and testis. In testis, it is specially found in mature spermatids projecting into the lumen of the seminiferous. Strongly expressed in glandular epithelia. Also expressed in embryonic tissues such as heart, lung, liver and brain.

Its subcellular location is the cell membrane. The protein localises to the cytoplasmic vesicle. The protein resides in the secretory vesicle membrane. It localises to the cytoplasm. Functionally, negatively regulates Ras signaling pathways and downstream activation of MAP kinases. Recruits and translocates NF1 to the cell membrane, thereby enabling NF1-dependent hydrolysis of active GTP-bound Ras to inactive GDP-bound Ras. Inhibits fibroblast growth factor (FGF)-induced retinal lens fiber differentiation, probably by inhibiting FGF-mediated phosphorylation of ERK1/2. Inhibits TGFB-induced epithelial-to-mesenchymal transition in lens epithelial cells. This is Sprouty-related, EVH1 domain-containing protein 2 (Spred2) from Mus musculus (Mouse).